Consider the following 499-residue polypeptide: MKKIILTIIDGLGLRKERQGNAYLQAKHPCFDYLFSMCPNSVLQASGQYVGLPEGQIGNSEVGHLNIGAGRVVYTGLSLINKAIENNTFKDNEILNDVIDKTIKNNTTLHVMGLLSNGGVHSLDLHLFEILKLAHSKGLKNVSVHVFGDGRDVKPQSIKNSLETLKDLCQKFGYKISSISGRFYAMDRDSIFSRNQEAYDAILGQSKNVIENIDDYIESQYKKGIFDEFFEPAQLKDGVFVKNGDSIIFFNFRPDRARQLSHMFIGSNLYTYKPKNQVQIDNFVSLMKYEGINSKIAFKEMEVVNPLGKVLESNDIKQLRLAETQKYAHVTFFFDGGVDIEYKNENRILVDSLKVDSFADYPHMSAKEITDSLLNNIEKNDFIIMNYANPDMVGHTGNLNATIEAIEFLDSQFQRILEYVSLNHENVTWFITADHGNAEITEDENNKPATKHTTSPVMFICTDKNVNLGNGSLCDVAPTILDYLKINKPKEMTGKSLLK.

Positions 10 and 60 each coordinate Mn(2+). Catalysis depends on Ser-60, which acts as the Phosphoserine intermediate. Residues His-121, 151–152 (RD), Arg-182, Arg-188, 253–256 (RPDR), and Lys-326 contribute to the substrate site. Mn(2+) is bound by residues Asp-391, His-395, Asp-434, His-435, and His-452.

It belongs to the BPG-independent phosphoglycerate mutase family. As to quaternary structure, monomer. Mn(2+) is required as a cofactor.

The catalysed reaction is (2R)-2-phosphoglycerate = (2R)-3-phosphoglycerate. The protein operates within carbohydrate degradation; glycolysis; pyruvate from D-glyceraldehyde 3-phosphate: step 3/5. In terms of biological role, catalyzes the interconversion of 2-phosphoglycerate and 3-phosphoglycerate. This Metamycoplasma hominis (strain ATCC 23114 / DSM 25592 / NBRC 14850 / NCTC 10111 / PG21) (Mycoplasma hominis) protein is 2,3-bisphosphoglycerate-independent phosphoglycerate mutase.